A 231-amino-acid polypeptide reads, in one-letter code: LexA repressor (231 aa).

Residues 26-46 constitute a DNA-binding region (H-T-H motif); it reads FDEMKDALDLRSKSGIHRLIT. Active-site for autocatalytic cleavage activity residues include Ser152 and Lys190.

The protein belongs to the peptidase S24 family. In terms of assembly, homodimer.

It catalyses the reaction Hydrolysis of Ala-|-Gly bond in repressor LexA.. Represses a number of genes involved in the response to DNA damage (SOS response), including recA and lexA. In the presence of single-stranded DNA, RecA interacts with LexA causing an autocatalytic cleavage which disrupts the DNA-binding part of LexA, leading to derepression of the SOS regulon and eventually DNA repair. The polypeptide is LexA repressor (Dinoroseobacter shibae (strain DSM 16493 / NCIMB 14021 / DFL 12)).